An 810-amino-acid polypeptide reads, in one-letter code: Calpain-3 (810 aa).

Residues 9–27 (VAQQTAAGSVPSTTSTTTE) are compositionally biased toward low complexity. The segment at 9-31 (VAQQTAAGSVPSTTSTTTEGTGG) is disordered. The Calpain catalytic domain maps to 68–410 (LYEDPDFPPN…FTKLEICNLT (343 aa)). Residues cysteine 123, histidine 327, and asparagine 351 contribute to the active site. The domain III stretch occupies residues 411-579 (PDTLEADKLQ…KRSLSEEVEN (169 aa)). The segment at 578–639 (ENMIEADRPS…SAKAREKSEE (62 aa)) is disordered. The linker stretch occupies residues 580–638 (MIEADRPSKKKKGKPIIFVSDRANSNKELTTDEDAGKDGEKTHVDEKKRSSAKAREKSE). Residues 613–639 (DAGKDGEKTHVDEKKRSSAKAREKSEE) are compositionally biased toward basic and acidic residues. EF-hand domains lie at 638–672 (EEET…VVKK), 681–714 (FELE…DKIK), 711–746 (DKIK…AGFR), and 776–810 (VRLD…TMYA). Residues 639–809 (EETQFRNIFR…VLEWLQLTMY (171 aa)) are domain IV. Residues alanine 651, aspartate 654, glutamate 656, glutamate 661, aspartate 694, aspartate 696, serine 698, lysine 700, glutamate 705, aspartate 724, aspartate 726, serine 728, threonine 730, glutamate 735, aspartate 789, aspartate 791, aspartate 793, and isoleucine 795 each coordinate Ca(2+).

This sequence belongs to the peptidase C2 family. In terms of assembly, homodimer; via EF-hand domain 4. Interacts with TTN/titin. Interacts with CMYA5; this interaction, which results in CMYA5 proteolysis, may protect CAPN3 from autolysis. Interacts with SIMC1. Interacts with UTP25; the interaction is required for CAPN3 translocation to the nucleolus. As to expression, skeletal muscle. Low levels in spleen, intestine and bone.

The protein localises to the cytoplasm. Its subcellular location is the nucleus. The protein resides in the nucleolus. The catalysed reaction is Broad endopeptidase activity.. Its activity is regulated as follows. Activated by micromolar concentrations of calcium and inhibited by calpastatin. Calcium-regulated non-lysosomal thiol-protease. Proteolytically cleaves CTBP1. Mediates, with UTP25, the proteasome-independent degradation of p53/TP53. This chain is Calpain-3 (CAPN3), found in Gallus gallus (Chicken).